The chain runs to 2024 residues: Pericentriolar material 1 protein (2024 aa).

The segment at 1-92 (MATGGGPFED…FPHSRYMSQM (92 aa)) is disordered. The residue at position 2 (Ala-2) is an N-acetylalanine. The mediates interaction with DZIP1 stretch occupies residues 2 to 1460 (ATGGGPFEDG…TWIASNSELT (1459 aa)). Residues 43–61 (RSSEKNKKKFGVESDKRVT) are compositionally biased toward basic and acidic residues. A phosphoserine mark is found at Ser-65, Ser-68, Ser-69, Ser-93, Ser-110, Ser-116, and Ser-119. The interval 111–163 (DLDQRSIGSDSQGRATAANNKRQLSENRKPFNFLPMQINTNKSKDASTNPPNR) is disordered. 2 stretches are compositionally biased toward polar residues: residues 116–132 (SIGSDSQGRATAANNKR) and 147–163 (QINTNKSKDASTNPPNR). Asn-159 is subject to Phosphoserine; in variant Ser-159. Residues 218–301 (KASSMREDLV…QLRALQGRQA (84 aa)) are a coiled coil. The interval 354 to 392 (RDSQPPAVPDNRRQAESLSLTREVSQSRKPSASERLPDE) is disordered. Polar residues predominate over residues 369 to 383 (ESLSLTREVSQSRKP). Ser-370 carries the phosphoserine modification. Residue Ser-372 is modified to Phosphoserine; by PLK4. Ser-384 carries the post-translational modification Phosphoserine. Lys-399 is subject to N6-acetyllysine. The stretch at 400–424 (MRVLQEKKQKMDKLLGELHTLRDQH) forms a coiled coil. Disordered regions lie at residues 421–492 (RDQH…KLQK) and 523–548 (ENRKDEETEESEYDSEHENSEPVTNI). 2 stretches are compositionally biased toward polar residues: residues 425 to 445 (LNNSSSSPQRSVDQRSTSAPS) and 456 to 477 (GESNSLTSSVPYPTASLVSQNE). A coiled-coil region spans residues 487 to 543 (SEKLQKLNEVRKRLNELRELVHYYEQTSDMMTDAVNENRKDEETEESEYDSEHENSE). Residue Ser-588 is modified to Phosphoserine. 2 disordered regions span residues 614-652 (HVAQGEDDEEEEEEAEEEGVSGASLSSHRSSLVDEHPED) and 699-726 (FYPAEEDTKQNSNNTRGNANKTQKDTGV). Acidic residues predominate over residues 618–632 (GEDDEEEEEEAEEEG). Low complexity predominate over residues 634-643 (SGASLSSHRS). Residue Ser-643 is modified to Phosphoserine. Residues 651–682 (EDAEFEQKINRLMAAKQKLRQLQDLVAMVQDD) adopt a coiled-coil conformation. A compositionally biased stretch (polar residues) spans 708 to 719 (QNSNNTRGNANK). Coiled-coil stretches lie at residues 726–769 (VNEK…LQTA) and 824–858 (SEMRRHEMLREELRQRRKQLEALMAEHQRRQGLAE). Residue Thr-859 is modified to Phosphothreonine. Phosphoserine is present on residues Ser-861, Ser-866, Ser-869, and Ser-872. A Phosphothreonine modification is found at Thr-877. The tract at residues 915 to 947 (TDEEEEEEQDASSNDNFSVCPSNSVNHNSYNGK) is disordered. Polar residues predominate over residues 925–946 (ASSNDNFSVCPSNSVNHNSYNG). A phosphoserine mark is found at Ser-960, Ser-977, Ser-988, and Ser-991. Residues 1063-1089 (TQLTWQQNNVQRLKQMLNELMRQQNQH) adopt a coiled-coil conformation. Disordered regions lie at residues 1085 to 1109 (QQNQHPEKPGGKERGSSASHPPSPS) and 1152 to 1211 (FSQN…RTPW). The segment covering 1089–1099 (HPEKPGGKERG) has biased composition (basic and acidic residues). Polar residues predominate over residues 1152 to 1173 (FSQNISTPSEQQQPLAQNSSGK). A phosphoserine mark is found at Ser-1185 and Ser-1188. The segment covering 1192 to 1201 (EKPRNKKLPE) has biased composition (basic and acidic residues). A phosphoserine mark is found at Ser-1229 and Ser-1231. The span at 1232–1246 (VEKSTSSNRKNQLDT) shows a compositional bias: polar residues. Residues 1232 to 1342 (VEKSTSSNRK…RHSAQTEEPV (111 aa)) form a disordered region. A phosphoserine mark is found at Ser-1257, Ser-1260, Ser-1262, and Ser-1263. An interaction with HAP1 region spans residues 1279–1799 (TRKASAQASL…TQALTNYGSG (521 aa)). Residues 1296 to 1313 (KSKSKKRNSTQLKSRVKN) show a composition bias toward basic residues. Phosphoserine occurs at positions 1318 and 1320. The residue at position 1468 (Thr-1468) is a Phosphothreonine. A coiled-coil region spans residues 1515 to 1539 (IHLDQALARMREYERMKTEAESNSN). Residues Ser-1573, Ser-1697, Ser-1730, Ser-1765, Ser-1768, Ser-1776, and Ser-1782 each carry the phosphoserine modification. Disordered stretches follow at residues 1725–1868 (LEDH…NNCP) and 1880–1944 (EQPL…PVLV). The segment covering 1768–1777 (SDQEEDEESE) has biased composition (acidic residues). Residues 1783 to 1797 (INLSKAETQALTNYG) are compositionally biased toward polar residues. The span at 1799–1815 (GEDENEDEEMEEFEEGP) shows a compositional bias: acidic residues. Residues 1818–1827 (VQTSLQANTE) are compositionally biased toward polar residues. Basic and acidic residues predominate over residues 1835-1860 (DEQVLQRDFKKTAESKNVPLEREATS). Residues 1905-1916 (PLRLPEMEPLVP) are compositionally biased toward low complexity. An interaction with BBS4 region spans residues 1913-2024 (PLVPRVKEVK…EPETVGAQSI (112 aa)). The span at 1924-1933 (AQETPESSLA) shows a compositional bias: polar residues. Ser-1958 and Ser-1977 each carry phosphoserine. A disordered region spans residues 2005–2024 (ELAGNSETLKEPETVGAQSI).

This sequence belongs to the PCM1 family. In terms of assembly, self-associates. Interacts with C2CD3. Interacts with BBS4, BBS8, CETN3, HAP1, NDE1, NDEL1, MAP1LC3B, GABARAPAL2, and GABARAP. Interacts with CEP131; the interaction increases in response to ultraviolet light (UV) radiation. Associates with microtubule; association to microtubule is reduced in response to cellular stress, such as ultraviolet light (UV) radiation or heat shock, in a process that requires p38 MAP kinase signaling. Interacts with CFAP263. Interacts with SSX2IP. Interacts with CCDC13. Interacts with CEP290. Interacts with PARD6A. Interacts with KIAA0753/OFIP, CEP20/FOR20 and OFD1; the interaction with CEP20/FOR20 and OFD1 may be mediated by KIAA0753/OFIP. Interacts with CCDC66. Interacts with CCDC61. Interacts with DZIP1; localizes DZIP1 and the associated BBSome to centriolar satellite. Interacts with CSTPP1, TTLL1, TPGS1 and LRRC49. Interacts with CFAP53. Ubiquitinated. Undergoes monoubiquitination catalyzed by the E3 ubiquitin-protein ligase MIB1 in proliferating cells, preventing cilia formation. Monoubiquitination by MIB1 is inhibited in response to cellular stress, such as ultraviolet light (UV) radiation or heat shock, resulting in cilia formation initiation. In terms of processing, variant Ser-159 is phosphorylated. Post-translationally, phosphorylated on multiple serine and threonine residues by DYRK3 during the G2-to-M transition, after the nuclear-envelope breakdown. Phosphorylation by DYRK3 promotes disassembly of pericentriolar material. Phosphorylation at Ser-372 mediated by PLK4 is required to maintain the integrity of centriolar satellites. Expressed in blood, bone marrow, breast, lymph node, ovary and thyroid.

It localises to the cytoplasm. Its subcellular location is the cytoskeleton. It is found in the microtubule organizing center. The protein resides in the centrosome. The protein localises to the cytoplasmic granule. It localises to the centriolar satellite. Its subcellular location is the cilium basal body. In terms of biological role, required for centrosome assembly and function. Essential for the correct localization of several centrosomal proteins including CEP250, CETN3, PCNT and NEK2. Required to anchor microtubules to the centrosome. Also involved in cilium biogenesis by recruiting the BBSome, a ciliary protein complex involved in cilium biogenesis, to the centriolar satellites. Recruits the tubulin polyglutamylase complex (TPGC) to centriolar satellites. The polypeptide is Pericentriolar material 1 protein (Homo sapiens (Human)).